Consider the following 389-residue polypeptide: 8-amino-7-oxononanoate synthase 2 (389 aa).

Arg-21 is a binding site for substrate. Residue 108-109 (GY) coordinates pyridoxal 5'-phosphate. His-133 is a substrate binding site. Residues Ser-180, 205–208 (DDAH), and 234–237 (TLSK) each bind pyridoxal 5'-phosphate. At Lys-237 the chain carries N6-(pyridoxal phosphate)lysine. Thr-351 is a binding site for substrate.

It belongs to the class-II pyridoxal-phosphate-dependent aminotransferase family. BioF subfamily. In terms of assembly, homodimer. The cofactor is pyridoxal 5'-phosphate.

It catalyses the reaction 6-carboxyhexanoyl-[ACP] + L-alanine + H(+) = (8S)-8-amino-7-oxononanoate + holo-[ACP] + CO2. Its pathway is cofactor biosynthesis; biotin biosynthesis. Functionally, catalyzes the decarboxylative condensation of pimeloyl-[acyl-carrier protein] and L-alanine to produce 8-amino-7-oxononanoate (AON), [acyl-carrier protein], and carbon dioxide. This chain is 8-amino-7-oxononanoate synthase 2 (bioF), found in Bacillus subtilis (strain 168).